Consider the following 113-residue polypeptide: Nucleoid-associated protein PMT_0025 (113 aa).

Belongs to the YbaB/EbfC family. Homodimer.

It localises to the cytoplasm. The protein resides in the nucleoid. Its function is as follows. Binds to DNA and alters its conformation. May be involved in regulation of gene expression, nucleoid organization and DNA protection. This Prochlorococcus marinus (strain MIT 9313) protein is Nucleoid-associated protein PMT_0025.